Consider the following 285-residue polypeptide: MADPSEHVGLGGPRSPARPEPPPTRFHQVHGANIRMDPSGTRATRVESFAHGVCFSREPLAPGQVFLVEIEEKELGWCGHLRLGLTALDPASLAAVPEFSLPDLVSLGHSWVFAITRHHNRVPREGQPEAEAAVPSGPQALLVEPYLRIEQFRIPRDRLVGRSRPGLYSHLLDQLYEQNVLPPTARRSRLGVLFCPREDGTADMHIIINGEDMGPSARGLPAAQPLYAVVDVFASTKSVRLVQLEYGLPSLQTLCRLVIHKRVVHRLAIDVLHLPKGLKDFCKYE.

Residues 1 to 28 (MADPSEHVGLGGPRSPARPEPPPTRFHQ) are disordered. The region spanning 23–244 (PTRFHQVHGA…STKSVRLVQL (222 aa)) is the NHR domain. Residues 250–285 (SLQTLCRLVIHKRVVHRLAIDVLHLPKGLKDFCKYE) form the SOCS box domain.

As to quaternary structure, probable component the ECS(NEURL2) E3 ubiquitin-protein ligase complex consisting of ELOB/Elongin B, ELOC/Elongin C, CUL5, RBX1 and NEURL2. Interacts with CTNNB1. Expressed specifically in skeletal and cardiac muscles.

The protein localises to the cytoplasm. Its pathway is protein modification; protein ubiquitination. Its function is as follows. Plays an important role in the process of myofiber differentiation and maturation. Probable substrate-recognition component of a SCF-like ECS (Elongin BC-CUL2/5-SOCS-box protein) E3 ubiquitin-protein ligase complex, which mediates the ubiquitination of proteins. Probably contributes to catalysis through recognition and positioning of the substrate and the ubiquitin-conjugating enzyme. During myogenesis, controls the ubiquitination and degradation of the specific pool of CTNNB1/beta-catenin located at the sarcolemma. The chain is Neuralized-like protein 2 (Neurl2) from Mus musculus (Mouse).